Consider the following 616-residue polypeptide: Dihydroxy-acid dehydratase (616 aa).

Mg(2+) is bound at residue Asp-81. Cys-122 is a binding site for [2Fe-2S] cluster. Residues Asp-123 and Lys-124 each contribute to the Mg(2+) site. Residue Lys-124 is modified to N6-carboxylysine. Cys-195 serves as a coordination point for [2Fe-2S] cluster. Position 491 (Glu-491) interacts with Mg(2+). The Proton acceptor role is filled by Ser-517.

This sequence belongs to the IlvD/Edd family. As to quaternary structure, homodimer. Requires [2Fe-2S] cluster as cofactor. The cofactor is Mg(2+).

It carries out the reaction (2R)-2,3-dihydroxy-3-methylbutanoate = 3-methyl-2-oxobutanoate + H2O. It catalyses the reaction (2R,3R)-2,3-dihydroxy-3-methylpentanoate = (S)-3-methyl-2-oxopentanoate + H2O. It functions in the pathway amino-acid biosynthesis; L-isoleucine biosynthesis; L-isoleucine from 2-oxobutanoate: step 3/4. Its pathway is amino-acid biosynthesis; L-valine biosynthesis; L-valine from pyruvate: step 3/4. In terms of biological role, functions in the biosynthesis of branched-chain amino acids. Catalyzes the dehydration of (2R,3R)-2,3-dihydroxy-3-methylpentanoate (2,3-dihydroxy-3-methylvalerate) into 2-oxo-3-methylpentanoate (2-oxo-3-methylvalerate) and of (2R)-2,3-dihydroxy-3-methylbutanoate (2,3-dihydroxyisovalerate) into 2-oxo-3-methylbutanoate (2-oxoisovalerate), the penultimate precursor to L-isoleucine and L-valine, respectively. The chain is Dihydroxy-acid dehydratase from Methylobacillus flagellatus (strain ATCC 51484 / DSM 6875 / VKM B-1610 / KT).